The following is a 404-amino-acid chain: Cysteine desulfurase IscS (404 aa).

Residues 75–76 (AT), asparagine 155, glutamine 183, and 203–205 (SGH) each bind pyridoxal 5'-phosphate. Lysine 206 carries the post-translational modification N6-(pyridoxal phosphate)lysine. Threonine 243 contacts pyridoxal 5'-phosphate. Cysteine 328 (cysteine persulfide intermediate) is an active-site residue. Cysteine 328 contacts [2Fe-2S] cluster.

The protein belongs to the class-V pyridoxal-phosphate-dependent aminotransferase family. NifS/IscS subfamily. Homodimer. Forms a heterotetramer with IscU, interacts with other sulfur acceptors. The cofactor is pyridoxal 5'-phosphate.

It is found in the cytoplasm. It catalyses the reaction (sulfur carrier)-H + L-cysteine = (sulfur carrier)-SH + L-alanine. It functions in the pathway cofactor biosynthesis; iron-sulfur cluster biosynthesis. Its function is as follows. Master enzyme that delivers sulfur to a number of partners involved in Fe-S cluster assembly, tRNA modification or cofactor biosynthesis. Catalyzes the removal of elemental sulfur atoms from cysteine to produce alanine. Functions as a sulfur delivery protein for Fe-S cluster synthesis onto IscU, an Fe-S scaffold assembly protein, as well as other S acceptor proteins. The chain is Cysteine desulfurase IscS from Shewanella pealeana (strain ATCC 700345 / ANG-SQ1).